The primary structure comprises 542 residues: CTP synthase (542 aa).

The segment at 1–265 is amidoligase domain; that stretch reads MTRYVFITGG…DREILAHFQM (265 aa). Ser13 is a CTP binding site. Ser13 is a UTP binding site. Residues 14–19 and Asp71 each bind ATP; that span reads SLGKGL. Residues Asp71 and Glu139 each coordinate Mg(2+). CTP contacts are provided by residues 146–148, 186–191, and Lys222; these read DIE and KTKPTQ. UTP-binding positions include 186 to 191 and Lys222; that span reads KTKPTQ. 238–240 contacts ATP; the sequence is RDV. In terms of domain architecture, Glutamine amidotransferase type-1 spans 291–541; sequence TIAIVGKYTG…IAAAIDQSRL (251 aa). Residue Gly353 coordinates L-glutamine. Residue Cys380 is the Nucleophile; for glutamine hydrolysis of the active site. Residues 381–384, Glu404, and Arg469 contribute to the L-glutamine site; that span reads FGMQ. Catalysis depends on residues His514 and Glu516.

It belongs to the CTP synthase family. Homotetramer.

The catalysed reaction is UTP + L-glutamine + ATP + H2O = CTP + L-glutamate + ADP + phosphate + 2 H(+). The enzyme catalyses L-glutamine + H2O = L-glutamate + NH4(+). It carries out the reaction UTP + NH4(+) + ATP = CTP + ADP + phosphate + 2 H(+). It functions in the pathway pyrimidine metabolism; CTP biosynthesis via de novo pathway; CTP from UDP: step 2/2. Its activity is regulated as follows. Allosterically activated by GTP, when glutamine is the substrate; GTP has no effect on the reaction when ammonia is the substrate. The allosteric effector GTP functions by stabilizing the protein conformation that binds the tetrahedral intermediate(s) formed during glutamine hydrolysis. Inhibited by the product CTP, via allosteric rather than competitive inhibition. Its function is as follows. Catalyzes the ATP-dependent amination of UTP to CTP with either L-glutamine or ammonia as the source of nitrogen. Regulates intracellular CTP levels through interactions with the four ribonucleotide triphosphates. This chain is CTP synthase, found in Methylorubrum extorquens (strain CM4 / NCIMB 13688) (Methylobacterium extorquens).